The following is a 211-amino-acid chain: Large ribosomal subunit protein uL4 (211 aa).

The disordered stretch occupies residues 40–85 (QQAHSRQGTASTLTRSEVRGGGRKPYKQKGTGRARQGSVRTPLRPG). Polar residues predominate over residues 41 to 54 (QAHSRQGTASTLTR). The segment covering 60 to 71 (GGRKPYKQKGTG) has biased composition (basic residues).

It belongs to the universal ribosomal protein uL4 family. As to quaternary structure, part of the 50S ribosomal subunit.

In terms of biological role, one of the primary rRNA binding proteins, this protein initially binds near the 5'-end of the 23S rRNA. It is important during the early stages of 50S assembly. It makes multiple contacts with different domains of the 23S rRNA in the assembled 50S subunit and ribosome. Its function is as follows. Forms part of the polypeptide exit tunnel. The chain is Large ribosomal subunit protein uL4 from Synechococcus sp. (strain CC9311).